The primary structure comprises 427 residues: Chaperone SurA (427 aa).

The signal sequence occupies residues 1 to 19; the sequence is MKIWKSILFTTLLSCGAVA. PpiC domains lie at 170 to 268 and 277 to 377; these read TVQY…KIED and VTEV…EVLD.

The protein resides in the periplasm. The catalysed reaction is [protein]-peptidylproline (omega=180) = [protein]-peptidylproline (omega=0). Chaperone involved in the correct folding and assembly of outer membrane proteins. Recognizes specific patterns of aromatic residues and the orientation of their side chains, which are found more frequently in integral outer membrane proteins. May act in both early periplasmic and late outer membrane-associated steps of protein maturation. The sequence is that of Chaperone SurA from Vibrio parahaemolyticus serotype O3:K6 (strain RIMD 2210633).